Reading from the N-terminus, the 402-residue chain is Calcium-responsive transactivator (402 aa).

Positions 1–148 are N-terminal auto-inhibitory domain; necessary for interaction with SMARCA4/BRG1; it reads MSVAFASARP…TLPTTSMSMS (148 aa). An SH2-binding motif is present at residues 50 to 53; that stretch reads YQQI. Disordered regions lie at residues 72–129, 141–170, 195–250, 262–290, and 305–402; these read QSLL…GPNH, PTTSMSMSGSGHGSGPGYSHSGPASQSVPL, MHQQ…SSQQ, QYGHGQAASEPMSQQYYPDGHGDYAYQPA, and TQHY…NYQQ. Residues 92 to 106 show a composition bias toward low complexity; the sequence is QSGSAQGLHSQGSLS. Residues 117 to 129 show a composition bias toward polar residues; that stretch reads SLMQAQIGNGPNH. The segment at 149–237 is methionine-rich intra-molecular domain; sequence GSGHGSGPGY…GGGVMGQRPM (89 aa). Over residues 196 to 224 the composition is skewed to low complexity; the sequence is HQQAASSHYSAAQGGSQHYQGQSMAMMGQ. The MFD domain stretch occupies residues 251-323; the sequence is YLGQEEYYGG…SQYSQQQTGY (73 aa). Composition is skewed to low complexity over residues 311–379 and 390–402; these read GGNS…RASQ and YGYEQGQYGNYQQ. Residues 340–402 form a necessary for nuclear localization region; sequence NQQSYPGQQQ…EQGQYGNYQQ (63 aa). The short motif at 359–362 is the SH2-binding element; it reads SQYS. Residues 377–385 carry the SH3-binding motif; it reads ASQTGPSTQ. The interval 393 to 402 is necessary for interaction with CREBBP and for the recruitment of CREBBP to the nuclear bodies; that stretch reads EQGQYGNYQQ. The SH2-binding signature appears at 397–400; the sequence is YGNY.

It belongs to the SS18 family. As to quaternary structure, homodimer. Dimerization may be necessary for its function in neuronal dendritic development. Interacts (via C-terminus) with CREBBP (via N-terminus), EP300 and SMARCA4/BRG1. Interacts with the nBAF complex. Association with CREBBP facilitates transcription while the association with SMARCA4/BRG1 suppresses CREST-mediated transcription in resting neurons.

It localises to the nucleus. It is found in the chromosome. The protein resides in the centromere. Its subcellular location is the kinetochore. Transcriptional activator which is required for calcium-dependent dendritic growth and branching in cortical neurons. Recruits CREB-binding protein (CREBBP) to nuclear bodies. Component of the CREST-BRG1 complex, a multiprotein complex that regulates promoter activation by orchestrating a calcium-dependent release of a repressor complex and a recruitment of an activator complex. In resting neurons, transcription of the c-FOS promoter is inhibited by BRG1-dependent recruitment of a phospho-RB1-HDAC1 repressor complex. Upon calcium influx, RB1 is dephosphorylated by calcineurin, which leads to release of the repressor complex. At the same time, there is increased recruitment of CREBBP to the promoter by a CREST-dependent mechanism, which leads to transcriptional activation. The CREST-BRG1 complex also binds to the NR2B promoter, and activity-dependent induction of NR2B expression involves a release of HDAC1 and recruitment of CREBBP. This is Calcium-responsive transactivator (SS18L1) from Bos taurus (Bovine).